The sequence spans 347 residues: Anthranilate phosphoribosyltransferase (347 aa).

5-phospho-alpha-D-ribose 1-diphosphate is bound by residues Gly88, 91–92 (GD), Thr96, 98–101 (NIST), 116–124 (KHGNRSVSS), and Ser128. Gly88 is a binding site for anthranilate. Mg(2+) is bound at residue Ser100. Residue Asn119 coordinates anthranilate. Anthranilate is bound at residue Arg174. Mg(2+)-binding residues include Asp232 and Glu233.

This sequence belongs to the anthranilate phosphoribosyltransferase family. As to quaternary structure, homodimer. Mg(2+) serves as cofactor.

It catalyses the reaction N-(5-phospho-beta-D-ribosyl)anthranilate + diphosphate = 5-phospho-alpha-D-ribose 1-diphosphate + anthranilate. It participates in amino-acid biosynthesis; L-tryptophan biosynthesis; L-tryptophan from chorismate: step 2/5. Catalyzes the transfer of the phosphoribosyl group of 5-phosphorylribose-1-pyrophosphate (PRPP) to anthranilate to yield N-(5'-phosphoribosyl)-anthranilate (PRA). In Shewanella sp. (strain MR-4), this protein is Anthranilate phosphoribosyltransferase.